The sequence spans 425 residues: Serine--tRNA ligase (425 aa).

230 to 232 (TAE) is an L-serine binding site. Residue 261–263 (RSE) coordinates ATP. Position 284 (glutamate 284) interacts with L-serine. 348–351 (EISS) provides a ligand contact to ATP. Residue serine 384 participates in L-serine binding.

Belongs to the class-II aminoacyl-tRNA synthetase family. Type-1 seryl-tRNA synthetase subfamily. Homodimer. The tRNA molecule binds across the dimer.

It is found in the cytoplasm. It carries out the reaction tRNA(Ser) + L-serine + ATP = L-seryl-tRNA(Ser) + AMP + diphosphate + H(+). The enzyme catalyses tRNA(Sec) + L-serine + ATP = L-seryl-tRNA(Sec) + AMP + diphosphate + H(+). It participates in aminoacyl-tRNA biosynthesis; selenocysteinyl-tRNA(Sec) biosynthesis; L-seryl-tRNA(Sec) from L-serine and tRNA(Sec): step 1/1. Catalyzes the attachment of serine to tRNA(Ser). Is also able to aminoacylate tRNA(Sec) with serine, to form the misacylated tRNA L-seryl-tRNA(Sec), which will be further converted into selenocysteinyl-tRNA(Sec). This Streptococcus pyogenes serotype M28 (strain MGAS6180) protein is Serine--tRNA ligase.